The primary structure comprises 338 residues: Heat-inducible transcription repressor HrcA (338 aa).

It belongs to the HrcA family.

Functionally, negative regulator of class I heat shock genes (grpE-dnaK-dnaJ and groELS operons). Prevents heat-shock induction of these operons. This is Heat-inducible transcription repressor HrcA from Thermotoga maritima (strain ATCC 43589 / DSM 3109 / JCM 10099 / NBRC 100826 / MSB8).